Reading from the N-terminus, the 25-residue chain is Glucomannokinase (25 aa).

This sequence belongs to the ROK (NagC/XylR) family. As to quaternary structure, homodimer.

The catalysed reaction is D-glucose + ATP = D-glucose 6-phosphate + ADP + H(+). It carries out the reaction D-mannose + ATP = D-mannose 6-phosphate + ADP + H(+). It participates in carbohydrate degradation; glycolysis; D-glyceraldehyde 3-phosphate and glycerone phosphate from D-glucose: step 1/4. The protein operates within carbohydrate metabolism; mannose metabolism. Its activity is regulated as follows. Competitively inhibited by 2-deoxy-glucose. Functionally, the enzyme has great affinity for glucose and mannose. This is Glucomannokinase from Segatella bryantii (Prevotella bryantii).